A 498-amino-acid chain; its full sequence is Glutamate--tRNA ligase (498 aa).

The short motif at 12–22 (PSPTGHLHIGN) is the 'HIGH' region element. The 'KMSKS' region motif lies at 259–263 (KLSKR). Position 262 (Lys262) interacts with ATP.

The protein belongs to the class-I aminoacyl-tRNA synthetase family. Glutamate--tRNA ligase type 1 subfamily. As to quaternary structure, monomer.

The protein resides in the cytoplasm. It carries out the reaction tRNA(Glu) + L-glutamate + ATP = L-glutamyl-tRNA(Glu) + AMP + diphosphate. Functionally, catalyzes the attachment of glutamate to tRNA(Glu) in a two-step reaction: glutamate is first activated by ATP to form Glu-AMP and then transferred to the acceptor end of tRNA(Glu). This chain is Glutamate--tRNA ligase, found in Limosilactobacillus fermentum (strain NBRC 3956 / LMG 18251) (Lactobacillus fermentum).